Consider the following 283-residue polypeptide: Urease accessory protein UreD (283 aa).

This sequence belongs to the UreD family. As to quaternary structure, ureD, UreF and UreG form a complex that acts as a GTP-hydrolysis-dependent molecular chaperone, activating the urease apoprotein by helping to assemble the nickel containing metallocenter of UreC. The UreE protein probably delivers the nickel.

The protein resides in the cytoplasm. In terms of biological role, required for maturation of urease via the functional incorporation of the urease nickel metallocenter. The polypeptide is Urease accessory protein UreD (Rhodopseudomonas palustris (strain BisB5)).